Here is a 348-residue protein sequence, read N- to C-terminus: Methylthioribose-1-phosphate isomerase (348 aa).

Residues 53–55 (RGA), R93, and Q197 each bind substrate. The active-site Proton donor is the D238. 248-249 (NK) is a binding site for substrate.

The protein belongs to the eIF-2B alpha/beta/delta subunits family. MtnA subfamily.

The enzyme catalyses 5-(methylsulfanyl)-alpha-D-ribose 1-phosphate = 5-(methylsulfanyl)-D-ribulose 1-phosphate. It participates in amino-acid biosynthesis; L-methionine biosynthesis via salvage pathway; L-methionine from S-methyl-5-thio-alpha-D-ribose 1-phosphate: step 1/6. Catalyzes the interconversion of methylthioribose-1-phosphate (MTR-1-P) into methylthioribulose-1-phosphate (MTRu-1-P). The chain is Methylthioribose-1-phosphate isomerase from Gloeobacter violaceus (strain ATCC 29082 / PCC 7421).